The sequence spans 189 residues: dCTP deaminase (189 aa).

DCTP contacts are provided by residues Lys112 to Arg117, Thr136 to Glu138, Gln157, Tyr171, and Gln181. Glu138 functions as the Proton donor/acceptor in the catalytic mechanism.

This sequence belongs to the dCTP deaminase family. As to quaternary structure, homotrimer.

The enzyme catalyses dCTP + H2O + H(+) = dUTP + NH4(+). Its pathway is pyrimidine metabolism; dUMP biosynthesis; dUMP from dCTP (dUTP route): step 1/2. Functionally, catalyzes the deamination of dCTP to dUTP. The chain is dCTP deaminase from Xanthomonas axonopodis pv. citri (strain 306).